The primary structure comprises 178 residues: Translation initiation factor IF-3 (178 aa).

This sequence belongs to the IF-3 family. Monomer.

It localises to the cytoplasm. In terms of biological role, IF-3 binds to the 30S ribosomal subunit and shifts the equilibrium between 70S ribosomes and their 50S and 30S subunits in favor of the free subunits, thus enhancing the availability of 30S subunits on which protein synthesis initiation begins. The polypeptide is Translation initiation factor IF-3 (Nautilia profundicola (strain ATCC BAA-1463 / DSM 18972 / AmH)).